The primary structure comprises 175 residues: SsrA-binding protein (175 aa).

Disordered regions lie at residues 1 to 29 (MTRNPQPDRSKTAPKNAKRDPVASGERDA) and 152 to 175 (KRETDRRKTADRDAREAIARSRKS).

The protein belongs to the SmpB family.

It is found in the cytoplasm. Its function is as follows. Required for rescue of stalled ribosomes mediated by trans-translation. Binds to transfer-messenger RNA (tmRNA), required for stable association of tmRNA with ribosomes. tmRNA and SmpB together mimic tRNA shape, replacing the anticodon stem-loop with SmpB. tmRNA is encoded by the ssrA gene; the 2 termini fold to resemble tRNA(Ala) and it encodes a 'tag peptide', a short internal open reading frame. During trans-translation Ala-aminoacylated tmRNA acts like a tRNA, entering the A-site of stalled ribosomes, displacing the stalled mRNA. The ribosome then switches to translate the ORF on the tmRNA; the nascent peptide is terminated with the 'tag peptide' encoded by the tmRNA and targeted for degradation. The ribosome is freed to recommence translation, which seems to be the essential function of trans-translation. The polypeptide is SsrA-binding protein (Koribacter versatilis (strain Ellin345)).